The primary structure comprises 378 residues: Probable methyltransferase At1g29790 (378 aa).

Residues 1–6 (MAGFTM) are Cytoplasmic-facing. Residues 7–29 (SLNLLLLVAMVATNILSLYHLSS) form a helical; Signal-anchor for type II membrane protein membrane-spanning segment. The Lumenal segment spans residues 30 to 378 (TTNFFQSTVK…TALLQKPVAR (349 aa)). Positions 67–87 (TTHQPDKSTSTSTSRAAVSSS) are disordered. A compositionally biased stretch (low complexity) spans 74-87 (STSTSTSRAAVSSS). N-linked (GlcNAc...) asparagine glycosylation occurs at N247.

It belongs to the methyltransferase superfamily.

The protein localises to the golgi apparatus membrane. The protein is Probable methyltransferase At1g29790 of Arabidopsis thaliana (Mouse-ear cress).